Here is a 391-residue protein sequence, read N- to C-terminus: Probable tRNA sulfurtransferase (391 aa).

Positions 60 to 167 (DEIIDHIKKV…KDNCYVYTDR (108 aa)) constitute a THUMP domain. ATP contacts are provided by residues 185–186 (LL), 210–211 (HF), arginine 267, glycine 289, and glutamine 298.

It belongs to the ThiI family.

Its subcellular location is the cytoplasm. It carries out the reaction [ThiI sulfur-carrier protein]-S-sulfanyl-L-cysteine + a uridine in tRNA + 2 reduced [2Fe-2S]-[ferredoxin] + ATP + H(+) = [ThiI sulfur-carrier protein]-L-cysteine + a 4-thiouridine in tRNA + 2 oxidized [2Fe-2S]-[ferredoxin] + AMP + diphosphate. The catalysed reaction is [ThiS sulfur-carrier protein]-C-terminal Gly-Gly-AMP + S-sulfanyl-L-cysteinyl-[cysteine desulfurase] + AH2 = [ThiS sulfur-carrier protein]-C-terminal-Gly-aminoethanethioate + L-cysteinyl-[cysteine desulfurase] + A + AMP + 2 H(+). It functions in the pathway cofactor biosynthesis; thiamine diphosphate biosynthesis. Catalyzes the ATP-dependent transfer of a sulfur to tRNA to produce 4-thiouridine in position 8 of tRNAs, which functions as a near-UV photosensor. Also catalyzes the transfer of sulfur to the sulfur carrier protein ThiS, forming ThiS-thiocarboxylate. This is a step in the synthesis of thiazole, in the thiamine biosynthesis pathway. The sulfur is donated as persulfide by IscS. In Finegoldia magna (strain ATCC 29328 / DSM 20472 / WAL 2508) (Peptostreptococcus magnus), this protein is Probable tRNA sulfurtransferase.